The sequence spans 140 residues: Large ribosomal subunit protein uL16 (140 aa).

The protein belongs to the universal ribosomal protein uL16 family. In terms of assembly, part of the 50S ribosomal subunit.

Functionally, binds 23S rRNA and is also seen to make contacts with the A and possibly P site tRNAs. This Phytoplasma mali (strain AT) protein is Large ribosomal subunit protein uL16.